Here is a 472-residue protein sequence, read N- to C-terminus: L-fuculokinase (472 aa).

This sequence belongs to the FGGY kinase family. The cofactor is a divalent metal cation.

The catalysed reaction is L-fuculose + ATP = L-fuculose 1-phosphate + ADP + H(+). It participates in carbohydrate degradation; L-fucose degradation; L-lactaldehyde and glycerone phosphate from L-fucose: step 2/3. In terms of biological role, catalyzes the phosphorylation of L-fuculose. Can also phosphorylate, with lower efficiency, D-ribulose, D-xylulose and D-fructose. This chain is L-fuculokinase, found in Escherichia coli (strain K12).